The sequence spans 263 residues: Small ribosomal subunit protein eS4 (263 aa).

An S4 RNA-binding domain is found at L42–V105.

The protein belongs to the eukaryotic ribosomal protein eS4 family. In terms of assembly, component of the small ribosomal subunit. Part of the small subunit (SSU) processome, composed of more than 70 proteins and the RNA chaperone small nucleolar RNA (snoRNA) U3.

The protein resides in the cytoplasm. It is found in the nucleus. It localises to the nucleolus. Functionally, component of the small ribosomal subunit. The ribosome is a large ribonucleoprotein complex responsible for the synthesis of proteins in the cell. Part of the small subunit (SSU) processome, first precursor of the small eukaryotic ribosomal subunit. During the assembly of the SSU processome in the nucleolus, many ribosome biogenesis factors, an RNA chaperone and ribosomal proteins associate with the nascent pre-rRNA and work in concert to generate RNA folding, modifications, rearrangements and cleavage as well as targeted degradation of pre-ribosomal RNA by the RNA exosome. This is Small ribosomal subunit protein eS4 (rps4x) from Danio rerio (Zebrafish).